Reading from the N-terminus, the 394-residue chain is MGIKSLYQIISENAPDAIKAGEIKNQFGRKVAIDAYVKTAQRYRASTDEEQLTNESGETTSHLMGMFYRTLRMVDNGIKPLYVFDGAPPKLKSGELAKRTMRKAEAQEAAEEAKETGTAEDVEKFSRRTVRVTREHNAECKRLLKLMGIPYIDAPTEAEAQCAVLAKEGKVFGAASEDMDTLCFAAPVLLRHLTFSEQRKEPILEIHLDKVLEGLGMEMTQFVDLCILLGCDYLDPIPKVGPNTALKMIRDHGTLEKVVETIESDPKKKYVIPDDWPYLQARDLFFNPDVRPADAPECDFKWTAPDVEGLVRFLVEEKGFSEDRVRNGAARLTKNLKSAQQSRLEGFFKPVAKTEQQKATAKRKAEEKAELAKKKKKEDAKAKRAMGAKPRGAR.

The interval 1-103 (MGIKSLYQII…GELAKRTMRK (103 aa)) is N-domain. Residue D34 participates in Mg(2+) binding. R69 lines the DNA pocket. D85 provides a ligand contact to Mg(2+). Residues 102–123 (RKAEAQEAAEEAKETGTAEDVE) are disordered. Residues 121–252 (DVEKFSRRTV…NTALKMIRDH (132 aa)) are I-domain. The Mg(2+) site is built by E157, E159, D178, and D180. E157 is a DNA binding site. Residues G230 and D232 each contribute to the DNA site. A Mg(2+)-binding site is contributed by D232. An interaction with PCNA region spans residues 340 to 348 (QQSRLEGFF). Residues 349–394 (KPVAKTEQQKATAKRKAEEKAELAKKKKKEDAKAKRAMGAKPRGAR) are disordered. Basic and acidic residues predominate over residues 363-382 (RKAEEKAELAKKKKKEDAKA). The segment covering 383–394 (KRAMGAKPRGAR) has biased composition (basic residues).

Belongs to the XPG/RAD2 endonuclease family. FEN1 subfamily. As to quaternary structure, interacts with PCNA. Three molecules of FEN1 bind to one PCNA trimer with each molecule binding to one PCNA monomer. PCNA stimulates the nuclease activity without altering cleavage specificity. Mg(2+) is required as a cofactor. In terms of processing, phosphorylated. Phosphorylation upon DNA damage induces relocalization to the nuclear plasma.

The protein resides in the nucleus. The protein localises to the nucleolus. It is found in the nucleoplasm. Its subcellular location is the mitochondrion. In terms of biological role, structure-specific nuclease with 5'-flap endonuclease and 5'-3' exonuclease activities involved in DNA replication and repair. During DNA replication, cleaves the 5'-overhanging flap structure that is generated by displacement synthesis when DNA polymerase encounters the 5'-end of a downstream Okazaki fragment. It enters the flap from the 5'-end and then tracks to cleave the flap base, leaving a nick for ligation. Also involved in the long patch base excision repair (LP-BER) pathway, by cleaving within the apurinic/apyrimidinic (AP) site-terminated flap. Acts as a genome stabilization factor that prevents flaps from equilibrating into structures that lead to duplications and deletions. Also possesses 5'-3' exonuclease activity on nicked or gapped double-stranded DNA, and exhibits RNase H activity. Also involved in replication and repair of rDNA and in repairing mitochondrial DNA. The protein is Flap endonuclease 1 of Arthroderma otae (strain ATCC MYA-4605 / CBS 113480) (Microsporum canis).